An 85-amino-acid chain; its full sequence is Alpha-toxin BmalphaTx47 (85 aa).

Positions 1 to 19 (MNYLIVISFALLLMTGVQS) are cleaved as a signal peptide. The region spanning 21 to 83 (RDAYIADSEN…VPIRISGSCR (63 aa)) is the LCN-type CS-alpha/beta domain. 4 disulfides stabilise this stretch: Cys31/Cys82, Cys35/Cys55, Cys41/Cys65, and Cys45/Cys67.

The protein belongs to the long (4 C-C) scorpion toxin superfamily. Sodium channel inhibitor family. Alpha subfamily. As to expression, expressed by the venom gland.

It localises to the secreted. Its function is as follows. Alpha toxins bind voltage-independently at site-3 of sodium channels (Nav) and inhibit the inactivation of the activated channels, thereby blocking neuronal transmission. This toxin expressed with the pET-14b vector has low inhibitory activity on sodium channels (11.33% on rNav1.2/SCN2A, 15.96% on mNav1.4/SCN4A and 5.04% on hNav1.5/SCN5A). When expressed with the pET-28a vector, this toxin has higher inhibitory activities (44.12% on rNav1.2/SCN2A, 25.40% on mNav1.4/SCN4A and 65.34% on hNav1.5/SCN5A). The sequence is that of Alpha-toxin BmalphaTx47 from Olivierus martensii (Manchurian scorpion).